A 583-amino-acid chain; its full sequence is Threonine--tRNA ligase (583 aa).

Residues 185–478 form a catalytic region; sequence DHRKLGRELD…LVEHYGGAFP (294 aa). 3 residues coordinate Zn(2+): Cys278, His329, and His455.

This sequence belongs to the class-II aminoacyl-tRNA synthetase family. Homodimer. Zn(2+) serves as cofactor.

Its subcellular location is the cytoplasm. The enzyme catalyses tRNA(Thr) + L-threonine + ATP = L-threonyl-tRNA(Thr) + AMP + diphosphate + H(+). Its function is as follows. Catalyzes the attachment of threonine to tRNA(Thr) in a two-step reaction: L-threonine is first activated by ATP to form Thr-AMP and then transferred to the acceptor end of tRNA(Thr). Also edits incorrectly charged L-seryl-tRNA(Thr). In Borrelia hermsii (strain HS1 / DAH), this protein is Threonine--tRNA ligase.